The primary structure comprises 151 residues: Transcriptional repressor NrdR (151 aa).

The segment at 3–34 (CPYCAYGESKVVDSRSTEDGSSIRRRRECLKC) is a zinc-finger region. An ATP-cone domain is found at 49-139 (ILVIKKNMSR…VYRQFKDINT (91 aa)).

This sequence belongs to the NrdR family. It depends on Zn(2+) as a cofactor.

Functionally, negatively regulates transcription of bacterial ribonucleotide reductase nrd genes and operons by binding to NrdR-boxes. The chain is Transcriptional repressor NrdR from Clostridium botulinum (strain Loch Maree / Type A3).